We begin with the raw amino-acid sequence, 152 residues long: Antiholin-like protein LrgA (152 aa).

A run of 4 helical transmembrane segments spans residues 23–43 (YSIF…KIIE), 45–65 (FMPI…IALC), 77–97 (VGTA…ISVI), and 108–128 (ILII…TGFS).

Belongs to the CidA/LrgA family. LrgA subfamily.

It localises to the cell membrane. Its function is as follows. Inhibits the expression or activity of extracellular murein hydrolases by interacting, possibly with LrgB, with the holin-like proteins CidA and/or CidB. The LrgAB and CidAB proteins may affect the proton motive force of the membrane. May be involved in programmed cell death (PCD), possibly triggering PCD in response to antibiotics and environmental stresses. In Staphylococcus epidermidis (strain ATCC 12228 / FDA PCI 1200), this protein is Antiholin-like protein LrgA.